Consider the following 113-residue polypeptide: Antimicrobial peptide microplusin (113 aa).

The first 19 residues, 1 to 19 (MKSLLVLALLAFGAVLVSA), serve as a signal peptide directing secretion. Disulfide bonds link Cys-25–Cys-71, Cys-38–Cys-99, and Cys-60–Cys-65.

It is found in the secreted. Functionally, has bacteriostatic activity against Gram-positive bacteria, but not against Gram-negative bacteria. Has fungistatic activity against some but not all fungi. Binds and sequesters copper and iron ions. Copper-chelating activity is crucial for antimicrobial activity against M.luteus. The polypeptide is Antimicrobial peptide microplusin (Argas monolakensis (Mono lake bird tick)).